Reading from the N-terminus, the 424-residue chain is UPF0229 protein ECA2349 (424 aa).

The disordered stretch occupies residues 53–111; that stretch reads SIPNADINEPMFHQGRGGHRHRVHPGNDHFVQNDKIERPQGGGGSGSGQGDASKDGEGD. The segment covering 77-90 has biased composition (basic and acidic residues); the sequence is PGNDHFVQNDKIER. Residues 92 to 101 are compositionally biased toward gly residues; that stretch reads QGGGGSGSGQ.

The protein belongs to the UPF0229 family.

The sequence is that of UPF0229 protein ECA2349 from Pectobacterium atrosepticum (strain SCRI 1043 / ATCC BAA-672) (Erwinia carotovora subsp. atroseptica).